The chain runs to 352 residues: Ion-translocating oxidoreductase complex subunit D (352 aa).

Helical transmembrane passes span 20 to 40 (IMLLVLLAAVPGIAAQLWFFG), 42 to 62 (GTLVQILLASVSALLAEALVL), 78 to 109 (ALLTGLLLAVSIPPLAPWWMVVLGTVFAVIIA), 123 to 143 (PAMIGYVVLLISFPVQMTSWL), and 148 to 168 (IAVNIPGFIDAIQVIFSGHTA). Residue threonine 187 is modified to FMN phosphoryl threonine. Helical transmembrane passes span 214-234 (ILAGVGWQWVNLAWLAGGVWL), 242-262 (WHIPLSFLVTLALCATLGWLF), 267-287 (LAAPQIHLLSGATMLGAFFIL), 301-321 (LIFGALAGLLVWMIRSFGGYP), and 322-342 (DGVAFAVLLANITVPLIDYYT).

The protein belongs to the NqrB/RnfD family. As to quaternary structure, the complex is composed of six subunits: RsxA, RsxB, RsxC, RsxD, RsxE and RsxG. FMN serves as cofactor.

It localises to the cell inner membrane. Functionally, part of a membrane-bound complex that couples electron transfer with translocation of ions across the membrane. Required to maintain the reduced state of SoxR. The protein is Ion-translocating oxidoreductase complex subunit D of Escherichia coli O6:H1 (strain CFT073 / ATCC 700928 / UPEC).